The primary structure comprises 601 residues: Elongation factor 4 (601 aa).

A tr-type G domain is found at 7–189; that stretch reads RNIRNFSIIA…AIVHRIPPPK (183 aa). GTP is bound by residues 19–24 and 136–139; these read DHGKST and NKID.

This sequence belongs to the TRAFAC class translation factor GTPase superfamily. Classic translation factor GTPase family. LepA subfamily.

It localises to the cell inner membrane. The enzyme catalyses GTP + H2O = GDP + phosphate + H(+). Required for accurate and efficient protein synthesis under certain stress conditions. May act as a fidelity factor of the translation reaction, by catalyzing a one-codon backward translocation of tRNAs on improperly translocated ribosomes. Back-translocation proceeds from a post-translocation (POST) complex to a pre-translocation (PRE) complex, thus giving elongation factor G a second chance to translocate the tRNAs correctly. Binds to ribosomes in a GTP-dependent manner. The polypeptide is Elongation factor 4 (Xanthomonas campestris pv. campestris (strain 8004)).